The primary structure comprises 413 residues: Putative competence-damage inducible protein (413 aa).

The protein belongs to the CinA family.

This is Putative competence-damage inducible protein from Lacticaseibacillus casei (strain BL23) (Lactobacillus casei).